The following is a 205-amino-acid chain: Small ribosomal subunit protein uS4 (205 aa).

The 59-residue stretch at 91–149 (MRLDALVLRAAFARSISQARQLVVHRHILVDGKLVDRPSYSVSPGQTVKVKPKSVPLDP) folds into the S4 RNA-binding domain.

This sequence belongs to the universal ribosomal protein uS4 family. Part of the 30S ribosomal subunit. Contacts protein S5. The interaction surface between S4 and S5 is involved in control of translational fidelity.

Its function is as follows. One of the primary rRNA binding proteins, it binds directly to 16S rRNA where it nucleates assembly of the body of the 30S subunit. Functionally, with S5 and S12 plays an important role in translational accuracy. The chain is Small ribosomal subunit protein uS4 from Tropheryma whipplei (strain TW08/27) (Whipple's bacillus).